A 162-amino-acid chain; its full sequence is Deoxyuridine 5'-triphosphate nucleotidohydrolase (162 aa).

Ser11 is modified (phosphoserine). DUTP-binding positions include 83–85 (RSG), 97–103 (GVIDEDY), Gly108, Arg151, and 156–157 (FG).

This sequence belongs to the dUTPase family. In terms of assembly, homotrimer. It depends on Mg(2+) as a cofactor. Phosphorylated in vivo on Ser-11, a reaction that can be catalyzed in vitro by CDC2.

Its subcellular location is the nucleus. The catalysed reaction is dUTP + H2O = dUMP + diphosphate + H(+). It participates in pyrimidine metabolism; dUMP biosynthesis; dUMP from dCTP (dUTP route): step 2/2. Catalyzes the cleavage of 2'-deoxyuridine 5'-triphosphate (dUTP) into 2'-deoxyuridine 5'-monophosphate (dUMP) and inorganic pyrophosphate and through its action efficiently prevents uracil misincorporation into DNA and at the same time provides dUMP, the substrate for de novo thymidylate biosynthesis. Inhibits peroxisome proliferator-activated receptor (PPAR) activity by binding of its N-terminal to PPAR, preventing the latter's dimerization with retinoid X receptor. Essential for embryonic development. This chain is Deoxyuridine 5'-triphosphate nucleotidohydrolase (Dut), found in Mus musculus (Mouse).